A 380-amino-acid polypeptide reads, in one-letter code: tRNA-specific 2-thiouridylase MnmA (380 aa).

ATP-binding positions include 6-13 and M32; that span reads ALSGGVDS. C101 (nucleophile) is an active-site residue. Residues C101 and C199 are joined by a disulfide bond. G125 contributes to the ATP binding site. The segment at 148–150 is interaction with tRNA; it reads KDQ. The active-site Cysteine persulfide intermediate is C199.

It belongs to the MnmA/TRMU family.

The protein resides in the cytoplasm. The catalysed reaction is S-sulfanyl-L-cysteinyl-[protein] + uridine(34) in tRNA + AH2 + ATP = 2-thiouridine(34) in tRNA + L-cysteinyl-[protein] + A + AMP + diphosphate + H(+). Functionally, catalyzes the 2-thiolation of uridine at the wobble position (U34) of tRNA, leading to the formation of s(2)U34. In Beutenbergia cavernae (strain ATCC BAA-8 / DSM 12333 / CCUG 43141 / JCM 11478 / NBRC 16432 / NCIMB 13614 / HKI 0122), this protein is tRNA-specific 2-thiouridylase MnmA.